Here is a 172-residue protein sequence, read N- to C-terminus: Adenine phosphoribosyltransferase (172 aa).

The protein belongs to the purine/pyrimidine phosphoribosyltransferase family. Homodimer.

The protein localises to the cytoplasm. It catalyses the reaction AMP + diphosphate = 5-phospho-alpha-D-ribose 1-diphosphate + adenine. Its pathway is purine metabolism; AMP biosynthesis via salvage pathway; AMP from adenine: step 1/1. Functionally, catalyzes a salvage reaction resulting in the formation of AMP, that is energically less costly than de novo synthesis. The polypeptide is Adenine phosphoribosyltransferase (Streptococcus mutans serotype c (strain ATCC 700610 / UA159)).